Here is a 352-residue protein sequence, read N- to C-terminus: C-C chemokine receptor type 5 (352 aa).

Residues 1–30 (MDYQVSSPTYDIDYYTSEPCQKINVKQIAA) are Extracellular-facing. Tyrosine 3 bears the Sulfotyrosine mark. Residues serine 6 and serine 7 are each glycosylated (O-linked (GalNAc...) serine). 3 positions are modified to sulfotyrosine: tyrosine 10, tyrosine 14, and tyrosine 15. 2 disulfides stabilise this stretch: cysteine 20–cysteine 269 and cysteine 101–cysteine 178. The chain crosses the membrane as a helical span at residues 31 to 58 (RLLPPLYSLVFIFGFVGNMLVILILINC). Topologically, residues 59-68 (KRLKSMTDIY) are cytoplasmic. Residues 69–89 (LLNLAISDLFFLLTVPFWAHY) traverse the membrane as a helical segment. Residues 90–102 (AAAQWDFGNTMCQ) are Extracellular-facing. The helical transmembrane segment at 103-124 (LLTGLYFIGFFSGIFFIILLTI) threads the bilayer. The Cytoplasmic portion of the chain corresponds to 125–141 (DRYLAIVHAVFALKART). A helical transmembrane segment spans residues 142–166 (VTFGVVTSVITWVVAVFASLPGIIF). Topologically, residues 167–198 (TRSQKEGLHYTCSSHFPYSQYQFWKNFQTLKI) are extracellular. A helical transmembrane segment spans residues 199-218 (VILGLVLPLLVMVICYSGIL). Topologically, residues 219–235 (KTLLRCRNEKKRHRAVR) are cytoplasmic. A helical membrane pass occupies residues 236-260 (LIFTIMIVYFLFWAPYNIVLLLNTF). Residues 261–277 (QEFFGLNNCSSSNRLDQ) are Extracellular-facing. Residues 278-301 (AMQVTETLGMTHCCINPIIYAFVG) traverse the membrane as a helical segment. At 302–352 (EKFRNYLLVFFQKHIAKHFCKCCSIFQQEAPERASSVYTRSTGEQEISVGL) the chain is on the cytoplasmic side. S-palmitoyl cysteine attachment occurs at residues cysteine 321, cysteine 323, and cysteine 324. A phosphoserine; by BARK1 mark is found at serine 336, serine 337, serine 342, and serine 349.

Belongs to the G-protein coupled receptor 1 family. As to quaternary structure, interacts with PRAF2. Efficient ligand binding to CCL3/MIP-1alpha and CCL4/MIP-1beta requires sulfation, O-glycosylation and sialic acid modifications. Glycosylation on Ser-6 is required for efficient binding of CCL4. Interacts with GRK2. Interacts with ARRB1 and ARRB2. Interacts with CNIH4. Interacts with S100A4; this interaction stimulates T-lymphocyte chemotaxis. Post-translationally, sulfated on at least 2 of the N-terminal tyrosines. Sulfation is required for efficient binding of the chemokines, CCL3 and CCL4. In terms of processing, palmitoylation in the C-terminal is important for cell surface expression. Phosphorylation on serine residues in the C-terminal is stimulated by binding CC chemokines especially by APO-RANTES. Post-translationally, O-glycosylated, but not N-glycosylated. Ser-6 appears to be the major site even if Ser-7 may be also O-glycosylated. Also sialylated glycans present which contribute to chemokine binding. Thr-16 and Ser-17 may also be glycosylated and, if so, with small moieties such as a T-antigen.

The protein localises to the cell membrane. Its function is as follows. Receptor for a number of inflammatory CC-chemokines including CCL3/MIP-1-alpha, CCL4/MIP-1-beta and RANTES and subsequently transduces a signal by increasing the intracellular calcium ion level. May play a role in the control of granulocytic lineage proliferation or differentiation. Participates in T-lymphocyte migration to the infection site by acting as a chemotactic receptor. This is C-C chemokine receptor type 5 (CCR5) from Symphalangus syndactylus (Siamang).